The primary structure comprises 325 residues: MLVISANEQRNLVNMNEVIEYAALALKEFSAERTITPIRGSLPFANEQNTALIMPSVAEGLEALGVKIVTVVPQNKQIGKKTINGIVMLSDFQAGEPLALLEGSYLTMIRTGALSGVATKYLARHNAKTLCIIGTGEQAKGIAEAIFAVRDIEKVILYNRTEEKAYAFAQYIQEKFGKPAYVYKDPNEAVREADIIVTTTNATTPVFSEILQKGVHVNAVGSFRPSMQELPSHAIAKANKVVVESKEAALDETGDLQVPIKEGLFKANAIHAELGQIISGEKAGRENDEEITIFKSVGLAVVDIIVAKYLYERALEQGVGNKIEF.

This sequence belongs to the ornithine cyclodeaminase/mu-crystallin family.

The enzyme catalyses L-proline + NAD(+) = 1-pyrroline-2-carboxylate + NADH + H(+). It carries out the reaction L-proline + NADP(+) = 1-pyrroline-2-carboxylate + NADPH + H(+). Catalyzes the reduction of Delta(1)-pyrroline-2-carboxylate (Pyr2C) to L-proline, using preferentially NADPH over NADH as the electron donor. Is likely involved in a degradation pathway that converts trans-3-hydroxy-L-proline (t3LHyp) to L-proline, which allows B.cereus to grow on t3LHyp as a sole carbon source. The chain is Delta(1)-pyrroline-2-carboxylate reductase from Bacillus cereus (strain ATCC 14579 / DSM 31 / CCUG 7414 / JCM 2152 / NBRC 15305 / NCIMB 9373 / NCTC 2599 / NRRL B-3711).